The primary structure comprises 245 residues: Ribonuclease PH (245 aa).

Phosphate contacts are provided by residues Arg-86 and Gly-124 to Arg-126.

It belongs to the RNase PH family. As to quaternary structure, homohexameric ring arranged as a trimer of dimers.

The catalysed reaction is tRNA(n+1) + phosphate = tRNA(n) + a ribonucleoside 5'-diphosphate. Its function is as follows. Phosphorolytic 3'-5' exoribonuclease that plays an important role in tRNA 3'-end maturation. Removes nucleotide residues following the 3'-CCA terminus of tRNAs; can also add nucleotides to the ends of RNA molecules by using nucleoside diphosphates as substrates, but this may not be physiologically important. Probably plays a role in initiation of 16S rRNA degradation (leading to ribosome degradation) during starvation. The polypeptide is Ribonuclease PH (Bacillus cereus (strain ATCC 10987 / NRS 248)).